Consider the following 466-residue polypeptide: tRNA(Ile)-lysidine synthase (466 aa).

42–47 lines the ATP pocket; it reads SGGVDS.

This sequence belongs to the tRNA(Ile)-lysidine synthase family.

It is found in the cytoplasm. It carries out the reaction cytidine(34) in tRNA(Ile2) + L-lysine + ATP = lysidine(34) in tRNA(Ile2) + AMP + diphosphate + H(+). Ligates lysine onto the cytidine present at position 34 of the AUA codon-specific tRNA(Ile) that contains the anticodon CAU, in an ATP-dependent manner. Cytidine is converted to lysidine, thus changing the amino acid specificity of the tRNA from methionine to isoleucine. This chain is tRNA(Ile)-lysidine synthase, found in Anaplasma marginale (strain St. Maries).